The following is a 414-amino-acid chain: Isocitrate dehydrogenase [NADP] cytoplasmic (414 aa).

S2 is subject to N-acetylserine. Y42 carries the phosphotyrosine modification. Residue 75 to 77 (TIT) coordinates NADP(+). T77 serves as a coordination point for substrate. K81 is modified (N6-acetyllysine). R82 is a binding site for NADP(+). Substrate-binding positions include 94–100 (SPNGTIR) and R109. At K126 the chain carries N6-succinyllysine. Positions 132 and 212 each coordinate substrate. An N6-acetyllysine mark is found at K224, K233, and K243. D252 serves as a coordination point for Mn(2+). Residue K260 participates in NADP(+) binding. Residues D275 and D279 each coordinate Mn(2+). 310–315 (GTVTRH) is an NADP(+) binding site. K321 is subject to N6-acetyllysine. N328 is a binding site for NADP(+). Residue S389 is modified to Phosphoserine. K400 carries the post-translational modification N6-succinyllysine.

It belongs to the isocitrate and isopropylmalate dehydrogenases family. As to quaternary structure, homodimer. Requires Mg(2+) as cofactor. Mn(2+) is required as a cofactor. In terms of processing, acetylation at Lys-374 dramatically reduces catalytic activity.

Its subcellular location is the cytoplasm. It is found in the cytosol. The catalysed reaction is D-threo-isocitrate + NADP(+) = 2-oxoglutarate + CO2 + NADPH. Functionally, catalyzes the NADP(+)-dependent oxidative decarboxylation of isocitrate (D-threo-isocitrate) to 2-ketoglutarate (2-oxoglutarate), which is required by other enzymes such as the phytanoyl-CoA dioxygenase. Plays a critical role in the generation of NADPH, an important cofactor in many biosynthesis pathways. May act as a corneal epithelial crystallin and may be involved in maintaining corneal epithelial transparency. The protein is Isocitrate dehydrogenase [NADP] cytoplasmic (IDH1) of Microtus mexicanus (Mexican vole).